The following is a 1027-amino-acid chain: Contactin-5 (1027 aa).

The signal sequence occupies residues 1-19 (MMWLSWKLFLFLSLIGCLS). Ig-like C2-type domains lie at 32-117 (PDDV…AVLQ), 123-209 (NFSG…RVLS), 227-307 (PKIE…RNVF), 317-401 (PQWV…AELK), 407-494 (PTFP…ASVS), and 498-593 (PTRI…TELL). Cys50 and Cys100 form a disulfide bridge. N-linked (GlcNAc...) asparagine glycans are attached at residues Asn65 and Asn123. Intrachain disulfides connect Cys144/Cys196 and Cys249/Cys296. N-linked (GlcNAc...) asparagine glycans are attached at residues Asn324, Asn376, and Asn467. 3 disulfides stabilise this stretch: Cys338-Cys385, Cys430-Cys478, and Cys520-Cys577. 4 consecutive Fibronectin type-III domains span residues 600–698 (PPGV…TNEA), 703–800 (PPAN…SAEG), 805–899 (APID…TKKS), and 901–994 (PSQA…SYAG). N-linked (GlcNAc...) asparagine glycosylation is found at Asn706, Asn743, Asn858, and Asn929. Ser999 carries the GPI-anchor amidated serine lipid modification. A propeptide spans 1000 to 1027 (AQSTLHMFSTSSSSVTLLLVLMVPSTSW) (removed in mature form).

The protein belongs to the immunoglobulin superfamily. Contactin family. In terms of assembly, interacts with INgCAM/L1 and the tenascin-R TNP protein. Does not interacts with NrCAM. In terms of tissue distribution, expressed by subpopulations of Purkinje cells in the cerebellum. Also expressed by one type of Purkinje cell afferents, the climbing fibers.

It is found in the cell membrane. Contactins mediate cell surface interactions during nervous system development. May contribute to the formation of somatotopic maps of cerebellar afferents during the development of the nervous system. The sequence is that of Contactin-5 (CNTN5) from Gallus gallus (Chicken).